We begin with the raw amino-acid sequence, 285 residues long: Glutamate racemase (285 aa).

Substrate-binding positions include 28-29 (DS) and 60-61 (YG). Cysteine 92 functions as the Proton donor/acceptor in the catalytic mechanism. Position 93-94 (93-94 (NT)) interacts with substrate. Cysteine 204 serves as the catalytic Proton donor/acceptor. 205-206 (TH) serves as a coordination point for substrate.

This sequence belongs to the aspartate/glutamate racemases family.

The catalysed reaction is L-glutamate = D-glutamate. Its pathway is cell wall biogenesis; peptidoglycan biosynthesis. Provides the (R)-glutamate required for cell wall biosynthesis. This Escherichia coli (strain UTI89 / UPEC) protein is Glutamate racemase.